Consider the following 292-residue polypeptide: Diaminopimelate epimerase (292 aa).

Substrate contacts are provided by Asn14 and Asn81. Cys90 serves as the catalytic Proton donor. Substrate is bound by residues 91 to 92 (GN), Asn166, Asn202, and 220 to 221 (ER). Cys229 functions as the Proton acceptor in the catalytic mechanism. 230–231 (GT) is a binding site for substrate.

The protein belongs to the diaminopimelate epimerase family. Homodimer.

The protein resides in the cytoplasm. The enzyme catalyses (2S,6S)-2,6-diaminopimelate = meso-2,6-diaminopimelate. Its pathway is amino-acid biosynthesis; L-lysine biosynthesis via DAP pathway; DL-2,6-diaminopimelate from LL-2,6-diaminopimelate: step 1/1. Functionally, catalyzes the stereoinversion of LL-2,6-diaminopimelate (L,L-DAP) to meso-diaminopimelate (meso-DAP), a precursor of L-lysine and an essential component of the bacterial peptidoglycan. The polypeptide is Diaminopimelate epimerase (Rhodococcus erythropolis (strain PR4 / NBRC 100887)).